A 99-amino-acid polypeptide reads, in one-letter code: High mobility group nucleosome-binding domain-containing protein 3 (99 aa).

3 stretches are compositionally biased toward basic and acidic residues: residues 1-25 (MPKRKSPENTEGKDGSKVTKQEPTR), 39-53 (PEPKPRKTSAKKEPG), and 62-72 (GKKEEKQEAGK). The disordered stretch occupies residues 1-99 (MPKRKSPENT…KTESVDNEGE (99 aa)). The residue at position 6 (serine 6) is a Phosphoserine. At threonine 10 the chain carries Phosphothreonine. 2 positions are modified to phosphoserine: serine 78 and serine 93. Residues 81–93 (GETKAEEAQKTES) show a composition bias toward basic and acidic residues.

The protein belongs to the HMGN family. Interacts with the ligand binding domain of the thyroid receptor (TR) (in vitro). Requires the presence of thyroid hormone for its interaction. Interacts with transcriptional regulator SEHBP. Interacts with nucleosomes. In terms of tissue distribution, expressed in kidney, lung, pancreas, testis, skeletal muscle, heart, thyroid gland, pituitary gland, prostate and uterus. Low expression in liver, spleen, placenta and ovaries.

Its subcellular location is the nucleus. Its function is as follows. Binds to nucleosomes, regulating chromatin structure and consequently, chromatin-dependent processes such as transcription, DNA replication and DNA repair. Affects both insulin and glucagon levels and modulates the expression of pancreatic genes involved in insulin secretion. Regulates the expression of the glucose transporter SLC2A2 by binding specifically to its promoter region and recruiting PDX1 and additional transcription factors. Regulates the expression of SLC6A9, a glycine transporter which regulates the glycine concentration in synaptic junctions in the central nervous system, by binding to its transcription start site. May play a role in ocular development and astrocyte function. In Homo sapiens (Human), this protein is High mobility group nucleosome-binding domain-containing protein 3 (HMGN3).